The sequence spans 411 residues: Copper resistance protein CRF1 (411 aa).

The copper-fist DNA-binding region spans 1 to 40 (MVVIEGIKYACERCIRGHRVSSCTHTQQPLIRIKPKGRPA). Positions 11, 14, 23, and 25 each coordinate Zn(2+). 4 stretches are compositionally biased toward low complexity: residues 115 to 190 (QQQA…PHSP), 205 to 214 (SSSSLSSLHS), 227 to 241 (SHNS…ANSP), and 350 to 370 (SVAA…PPSS). 2 disordered regions span residues 115 to 241 (QQQA…ANSP) and 348 to 389 (EMSV…VSPA).

The protein localises to the nucleus. Functionally, transcriptional regulator involved in resistance to high copper concentration. The chain is Copper resistance protein CRF1 (CRF1) from Yarrowia lipolytica (strain CLIB 122 / E 150) (Yeast).